Reading from the N-terminus, the 176-residue chain is Nascent polypeptide-associated complex subunit alpha (176 aa).

The 65-residue stretch at 14–78 (SKNEKKAREL…AKVDDFTQRL (65 aa)) folds into the NAC-A/B domain. A disordered region spans residues 85–127 (LQQNEGVLPAGQDAVSKDPQSIQADMQAAADSATDKPSADDAV). The UBA domain occupies 137–176 (LNADDIELVMQQAGVPRAKAAKALKEHDSDIVNAIMALSG).

The protein belongs to the NAC-alpha family. As to quaternary structure, part of the nascent polypeptide-associated complex (NAC), consisting of EGD2 and EGD1. NAC associates with ribosomes via EGD1.

It is found in the cytoplasm. The protein localises to the nucleus. Its function is as follows. Component of the nascent polypeptide-associated complex (NAC), a dynamic component of the ribosomal exit tunnel, protecting the emerging polypeptides from interaction with other cytoplasmic proteins to ensure appropriate nascent protein targeting. The NAC complex also promotes mitochondrial protein import by enhancing productive ribosome interactions with the outer mitochondrial membrane and blocks the inappropriate interaction of ribosomes translating non-secretory nascent polypeptides with translocation sites in the membrane of the endoplasmic reticulum. EGD2 may also be involved in transcription regulation. The sequence is that of Nascent polypeptide-associated complex subunit alpha (EGD2) from Kluyveromyces lactis (strain ATCC 8585 / CBS 2359 / DSM 70799 / NBRC 1267 / NRRL Y-1140 / WM37) (Yeast).